The primary structure comprises 87 residues: Small ribosomal subunit protein bS20 (87 aa).

Positions 1–22 (MANTSQARKRARQAGVRRVRNA) are disordered. Residues 7–20 (ARKRARQAGVRRVR) show a composition bias toward basic residues.

The protein belongs to the bacterial ribosomal protein bS20 family.

Functionally, binds directly to 16S ribosomal RNA. In Nitrosococcus oceani (strain ATCC 19707 / BCRC 17464 / JCM 30415 / NCIMB 11848 / C-107), this protein is Small ribosomal subunit protein bS20.